Reading from the N-terminus, the 1322-residue chain is Putative DNA ligase 4 (1322 aa).

11 residues coordinate ATP: glutamate 265, lysine 267, arginine 272, arginine 287, glutamate 317, phenylalanine 387, glutamate 497, lysine 502, arginine 513, lysine 519, and lysine 521. Residue lysine 267 is the N6-AMP-lysine intermediate of the active site. Glutamate 317 is a binding site for Mg(2+). Position 497 (glutamate 497) interacts with Mg(2+). BRCT domains follow at residues 686–768 (LDVQ…PKFD) and 825–935 (ERFC…TYSL). 2 disordered regions span residues 945–1212 (IERS…SATC) and 1245–1310 (AEAK…KKVS). Basic and acidic residues predominate over residues 957–969 (DKLEENEKADTSH). Composition is skewed to basic residues over residues 970–979 (VKHAPRKRGR) and 994–1005 (PVRRTRARRGNQ). 2 stretches are compositionally biased toward basic and acidic residues: residues 1007–1022 (AKIDDVEPEESDHGET) and 1033–1047 (NISKMEVDSFDKDQV). The segment covering 1051-1063 (PVRRTRARRGKQH) has biased composition (basic residues). Composition is skewed to basic and acidic residues over residues 1082–1104 (DDQRLDADYISKMEEDSSDRDQG), 1125–1161 (AKIDRETGPGETGQDDKKLNADSISKMEEHAHDKDQE), and 1190–1204 (PKHERNQTVLRRDTA). The segment covering 1261–1288 (SSYVAPVPQASASSASSSGVPAPHAGSS) has biased composition (low complexity).

This sequence belongs to the ATP-dependent DNA ligase family. It depends on Mg(2+) as a cofactor.

Its subcellular location is the nucleus. The enzyme catalyses ATP + (deoxyribonucleotide)n-3'-hydroxyl + 5'-phospho-(deoxyribonucleotide)m = (deoxyribonucleotide)n+m + AMP + diphosphate.. DNA ligase involved in DNA non-homologous end joining (NHEJ); required for double-strand break (DSB) repair. The protein is Putative DNA ligase 4 (LIG4) of Oryza sativa subsp. japonica (Rice).